The following is a 347-amino-acid chain: MKNILDYTLEELTLWMKENNESSFRAKQIMSWIYKDVRNFSDMRNMPKSLIAKLEENFEISLPEIEEIYKSELDGTEKFLFKFSDGNLIESVLMRYKHGNSICISTQIGCRMGCKFCASTIDGRIRNLTTGEILSQILVVQNYIGERISNVVLMGSGEPLDNYENVMKFLEVVSAEYGLNIGQRHITLSTCGIVPKIYELADKELSITLAISLHAFSDEKRKEIMPIANKYSIDEILNACKYFINKTKRRITFEYSLVKDVNDSKEDARALGKLLKGMLCHVNLIPVNEIKERTFKRSSKETIQDFANILSNLGIEVTVRREMGSDINAACGQLRRSYIKTQETRGE.

E90 serves as the catalytic Proton acceptor. A Radical SAM core domain is found at Y96 to D326. A disulfide bridge connects residues C103 and C331. C110, C114, and C117 together coordinate [4Fe-4S] cluster. Residues G157 to E158, S189, S212 to H214, and N288 contribute to the S-adenosyl-L-methionine site. The active-site S-methylcysteine intermediate is the C331.

This sequence belongs to the radical SAM superfamily. RlmN family. The cofactor is [4Fe-4S] cluster.

It localises to the cytoplasm. The enzyme catalyses adenosine(2503) in 23S rRNA + 2 reduced [2Fe-2S]-[ferredoxin] + 2 S-adenosyl-L-methionine = 2-methyladenosine(2503) in 23S rRNA + 5'-deoxyadenosine + L-methionine + 2 oxidized [2Fe-2S]-[ferredoxin] + S-adenosyl-L-homocysteine. It catalyses the reaction adenosine(37) in tRNA + 2 reduced [2Fe-2S]-[ferredoxin] + 2 S-adenosyl-L-methionine = 2-methyladenosine(37) in tRNA + 5'-deoxyadenosine + L-methionine + 2 oxidized [2Fe-2S]-[ferredoxin] + S-adenosyl-L-homocysteine. In terms of biological role, specifically methylates position 2 of adenine 2503 in 23S rRNA and position 2 of adenine 37 in tRNAs. This chain is Probable dual-specificity RNA methyltransferase RlmN, found in Clostridium botulinum (strain Alaska E43 / Type E3).